A 338-amino-acid polypeptide reads, in one-letter code: 4-hydroxythreonine-4-phosphate dehydrogenase (338 aa).

Residues histidine 139 and threonine 140 each coordinate substrate. A divalent metal cation-binding residues include histidine 169, histidine 214, and histidine 270. Residues lysine 278, asparagine 287, and arginine 296 each coordinate substrate.

It belongs to the PdxA family. As to quaternary structure, homodimer. Zn(2+) is required as a cofactor. Mg(2+) serves as cofactor. Requires Co(2+) as cofactor.

It localises to the cytoplasm. The enzyme catalyses 4-(phosphooxy)-L-threonine + NAD(+) = 3-amino-2-oxopropyl phosphate + CO2 + NADH. Its pathway is cofactor biosynthesis; pyridoxine 5'-phosphate biosynthesis; pyridoxine 5'-phosphate from D-erythrose 4-phosphate: step 4/5. In terms of biological role, catalyzes the NAD(P)-dependent oxidation of 4-(phosphooxy)-L-threonine (HTP) into 2-amino-3-oxo-4-(phosphooxy)butyric acid which spontaneously decarboxylates to form 3-amino-2-oxopropyl phosphate (AHAP). The polypeptide is 4-hydroxythreonine-4-phosphate dehydrogenase (Desulfosudis oleivorans (strain DSM 6200 / JCM 39069 / Hxd3) (Desulfococcus oleovorans)).